Here is a 344-residue protein sequence, read N- to C-terminus: Molybdate/tungstate import ATP-binding protein WtpC (344 aa).

An ABC transporter domain is found at 2-231; sequence LRVESVSKDY…PVDEGVARFL (230 aa). 33-40 lines the ATP pocket; it reads GPSGAGKT. A Mop domain is found at 280–344; the sequence is KTSARNEFRA…SFKTSAIKVF (65 aa).

This sequence belongs to the ABC transporter superfamily. Sulfate/tungstate importer (TC 3.A.1.6) family. The complex is composed of two ATP-binding proteins (WtpC), two transmembrane proteins (WtpB) and a solute-binding protein (WtpA).

The protein localises to the cell membrane. The enzyme catalyses tungstate(in) + ATP + H2O = tungstate(out) + ADP + phosphate + H(+). Its function is as follows. Part of the ABC transporter complex WtpABC involved in molybdate/tungstate import. Responsible for energy coupling to the transport system. This is Molybdate/tungstate import ATP-binding protein WtpC (wtpC) from Pyrococcus abyssi (strain GE5 / Orsay).